The following is a 472-amino-acid chain: MERSRQVYYIINEYLGRHPSSTEYQVLKHQVEKISKINNFNKETFFFLLKKNKNKFFKDLELSDDLLKKRIDEYFSKQKHAKRLGNLFAIMELQKILISSFTKTIGILTTKVPEYYHSTIKLEYSSMEKIADDILDSYNVVEPSKEVKGRHKVSDLVGHVYKIMEEYLRRHSNSCLCYGSYSLHFLNNKIEYGDIDVLQTNARTFLINIAFLIKFITGRRIVLLKVPFLKNYVIMHDEETNHVMDTFNIREKTMNMIPKIMIDNMYIVDPCIQLLNMIKMLSQIDRLEELQAKFEKLSVRLGTLLEYTRYRYSIPLDSESILEVRAKLDKDKRKITVDFKKYKLNYIKCYFYLDEVELKKFISKNSGLDEYEDFEAVTNSEYAIRNKTMYTYFSNTALMRSENEIHPITINALTSHALLYHVITRKFYDDLLGDLVRSLMIVEKVPVFKIIPRDKKQGRHTIIDIEKDIIFH.

Catalysis depends on residues aspartate 194 and aspartate 196.

This sequence belongs to the poxviridae poly(A) polymerase catalytic subunit family. As to quaternary structure, heterodimer of a large (catalytic) subunit and a small (regulatory) subunit.

It catalyses the reaction RNA(n) + ATP = RNA(n)-3'-adenine ribonucleotide + diphosphate. Its function is as follows. Polymerase that creates the 3'-poly(A) tail of mRNA's. In Fowlpox virus (strain NVSL) (FPV), this protein is Poly(A) polymerase catalytic subunit (PAPL).